Here is a 238-residue protein sequence, read N- to C-terminus: 7-cyano-7-deazaguanine synthase (238 aa).

Position 14-24 (14-24 (FSGGQDSATCL)) interacts with ATP. 4 residues coordinate Zn(2+): Cys-202, Cys-217, Cys-220, and Cys-223.

It belongs to the QueC family. The cofactor is Zn(2+).

The catalysed reaction is 7-carboxy-7-deazaguanine + NH4(+) + ATP = 7-cyano-7-deazaguanine + ADP + phosphate + H2O + H(+). The protein operates within purine metabolism; 7-cyano-7-deazaguanine biosynthesis. In terms of biological role, catalyzes the ATP-dependent conversion of 7-carboxy-7-deazaguanine (CDG) to 7-cyano-7-deazaguanine (preQ(0)). In Nitrobacter winogradskyi (strain ATCC 25391 / DSM 10237 / CIP 104748 / NCIMB 11846 / Nb-255), this protein is 7-cyano-7-deazaguanine synthase.